Here is a 124-residue protein sequence, read N- to C-terminus: Fluoride-specific ion channel FluC (124 aa).

Transmembrane regions (helical) follow at residues 5-25 (VYIALLGALGCLCRYFLSGFV), 32-52 (SFPYGTLAVNLIGAFLIGLIM), 67-87 (FAITIGFLGGLTTFSTFSFET), and 96-116 (LLIAIVNVLVSVVACLTCTWI). Na(+) is bound by residues glycine 75 and threonine 78.

It belongs to the fluoride channel Fluc/FEX (TC 1.A.43) family.

The protein resides in the cell inner membrane. The catalysed reaction is fluoride(in) = fluoride(out). With respect to regulation, na(+) is not transported, but it plays an essential structural role and its presence is essential for fluoride channel function. Fluoride-specific ion channel. Important for reducing fluoride concentration in the cell, thus reducing its toxicity. This chain is Fluoride-specific ion channel FluC, found in Citrifermentans bemidjiense (strain ATCC BAA-1014 / DSM 16622 / JCM 12645 / Bem) (Geobacter bemidjiensis).